The sequence spans 549 residues: Chaperonin GroEL (549 aa).

ATP-binding positions include 29–32, Lys-50, 86–90, Gly-418, and Asp-499; these read TAGP and DGTTT.

This sequence belongs to the chaperonin (HSP60) family. As to quaternary structure, forms a cylinder of 14 subunits composed of two heptameric rings stacked back-to-back. Interacts with the co-chaperonin GroES.

It localises to the cytoplasm. It carries out the reaction ATP + H2O + a folded polypeptide = ADP + phosphate + an unfolded polypeptide.. In terms of biological role, together with its co-chaperonin GroES, plays an essential role in assisting protein folding. The GroEL-GroES system forms a nano-cage that allows encapsulation of the non-native substrate proteins and provides a physical environment optimized to promote and accelerate protein folding. This is Chaperonin GroEL from Wolbachia sp. subsp. Drosophila simulans (strain wRi).